The sequence spans 112 residues: Putative regulatory protein DP2861 (112 aa).

This sequence belongs to the RemA family.

This is Putative regulatory protein DP2861 from Desulfotalea psychrophila (strain LSv54 / DSM 12343).